The sequence spans 782 residues: Phosphoribosylformylglycinamidine synthase subunit PurL (782 aa).

Histidine 48 is an active-site residue. Positions 51 and 90 each coordinate ATP. Glutamate 92 is a binding site for Mg(2+). Residues 93–96 (SHNH) and arginine 115 each bind substrate. Histidine 94 functions as the Proton acceptor in the catalytic mechanism. Aspartate 116 is a Mg(2+) binding site. Residue glutamine 239 participates in substrate binding. Aspartate 267 contributes to the Mg(2+) binding site. A substrate-binding site is contributed by 311–313 (ESQ). Aspartate 525 and glycine 562 together coordinate ATP. Asparagine 563 is a binding site for Mg(2+). Serine 565 is a substrate binding site.

It belongs to the FGAMS family. In terms of assembly, monomer. Part of the FGAM synthase complex composed of 1 PurL, 1 PurQ and 2 PurS subunits.

The protein localises to the cytoplasm. It catalyses the reaction N(2)-formyl-N(1)-(5-phospho-beta-D-ribosyl)glycinamide + L-glutamine + ATP + H2O = 2-formamido-N(1)-(5-O-phospho-beta-D-ribosyl)acetamidine + L-glutamate + ADP + phosphate + H(+). Its pathway is purine metabolism; IMP biosynthesis via de novo pathway; 5-amino-1-(5-phospho-D-ribosyl)imidazole from N(2)-formyl-N(1)-(5-phospho-D-ribosyl)glycinamide: step 1/2. Its function is as follows. Part of the phosphoribosylformylglycinamidine synthase complex involved in the purines biosynthetic pathway. Catalyzes the ATP-dependent conversion of formylglycinamide ribonucleotide (FGAR) and glutamine to yield formylglycinamidine ribonucleotide (FGAM) and glutamate. The FGAM synthase complex is composed of three subunits. PurQ produces an ammonia molecule by converting glutamine to glutamate. PurL transfers the ammonia molecule to FGAR to form FGAM in an ATP-dependent manner. PurS interacts with PurQ and PurL and is thought to assist in the transfer of the ammonia molecule from PurQ to PurL. The chain is Phosphoribosylformylglycinamidine synthase subunit PurL from Nostoc sp. (strain PCC 7120 / SAG 25.82 / UTEX 2576).